The chain runs to 274 residues: Large ribosomal subunit protein uL2cz/uL2cy (274 aa).

Disordered stretches follow at residues M1–S24 and M223–K274. Positions K7–S24 are enriched in polar residues.

This sequence belongs to the universal ribosomal protein uL2 family. In terms of assembly, part of the 50S ribosomal subunit.

The protein localises to the plastid. Its subcellular location is the chloroplast. This Nicotiana sylvestris (Wood tobacco) protein is Large ribosomal subunit protein uL2cz/uL2cy (rpl2-A).